The following is a 224-amino-acid chain: 7-cyano-7-deazaguanine synthase (224 aa).

10–20 is a binding site for ATP; the sequence is FSGGQDSTTCL. Residues C193, C201, C204, and C207 each coordinate Zn(2+).

The protein belongs to the QueC family. Requires Zn(2+) as cofactor.

The enzyme catalyses 7-carboxy-7-deazaguanine + NH4(+) + ATP = 7-cyano-7-deazaguanine + ADP + phosphate + H2O + H(+). The protein operates within purine metabolism; 7-cyano-7-deazaguanine biosynthesis. Functionally, catalyzes the ATP-dependent conversion of 7-carboxy-7-deazaguanine (CDG) to 7-cyano-7-deazaguanine (preQ(0)). The chain is 7-cyano-7-deazaguanine synthase from Neisseria gonorrhoeae (strain ATCC 700825 / FA 1090).